The following is a 1693-amino-acid chain: Non-structural polyprotein pORF1 (1693 aa).

Positions 56–240 (VFRPEVFWNH…HDVSNLRSWI (185 aa)) constitute an Alphavirus-like MT domain. Residues 60 to 240 (EVFWNHPIQR…HDVSNLRSWI (181 aa)) form a methyltransferase region. The interval 241-439 (RTTKVTGDHP…FYAQCRRWLS (199 aa)) is Y-domain. Residues Cys-434 and Cys-481 are joined by a disulfide bond. Residues 442–509 (FHLDPRVLVF…EAYEGSDVDP (68 aa)) are protease. Residues 510 to 691 (AESAISDISG…FSPGHVWESA (182 aa)) form a zinc-binding region. Positions 671, 673, and 686 each coordinate Zn(2+). Residues 712 to 771 (PSPAQPDLGFTSEPSIPSRAATPTPAAPLPPPAPDPSPTLSAPARGEPAPGATARAPAIT) are disordered. Residues 712–778 (PSPAQPDLGF…AITHQTARHR (67 aa)) form a hinge region. A compositionally biased stretch (low complexity) spans 725–735 (PSIPSRAATPT). Residues 736–748 (PAAPLPPPAPDPS) show a composition bias toward pro residues. The 147-residue stretch at 775–921 (ARHRRLLFTY…LYLPELAARW (147 aa)) folds into the Macro domain. An X-domain region spans residues 785-942 (PDGSKVFAGS…TITEDVARTA (158 aa)). A (+)RNA virus helicase ATP-binding domain is found at 934–1082 (ITEDVARTAN…RPDLAPTSWW (149 aa)). Residues 960 to 1204 (GCRVTPGVVQ…ISDAIVNNFF (245 aa)) are NTPase/helicase. Position 975 to 982 (975 to 982 (GVPGSGKS)) interacts with ATP. In terms of domain architecture, (+)RNA virus helicase C-terminal spans 1083 to 1216 (HVTHRCPADV…GGEIGHQRPS (134 aa)). An RNA-directed RNA polymerase region spans residues 1207–1693 (GGEIGHQRPS…LTNSILCRVE (487 aa)). The region spanning 1454 to 1565 (SMVFENDFSE…LCSEYRQSPG (112 aa)) is the RdRp catalytic domain.

Belongs to the hepevirus non-structural polyprotein family. In terms of assembly, the protease domain interacts with host EIF2AK4 (via C-terminus); this interaction inhibits dimerization of EIF2AK4 and prevents EIF2AK4-mediated phosphorylation of host EIF2A. It depends on Mg(2+) as a cofactor. ORF1 polyprotein does not seem to be processed into distinct enzymatic domains by a viral protease belonging to ORF1, but could be processed by a host serine protease like thrombin.

The protein localises to the host cytoplasm. The protein resides in the host perinuclear region. It carries out the reaction RNA(n) + a ribonucleoside 5'-triphosphate = RNA(n+1) + diphosphate. The enzyme catalyses GTP + S-adenosyl-L-methionine = N(7)-methyl-GTP + S-adenosyl-L-homocysteine. With respect to regulation, putative protease: Inhibited by chymostatin. Methyltransferase: Displays a capping enzyme activity. This function is necessary since all viral RNAs are synthesized in the cytoplasm, and host capping enzymes are restricted to the nucleus. The enzymatic reaction involves a covalent link between 7-methyl-GMP and the methyltransferase, whereas eukaryotic capping enzymes form a covalent complex only with GMP. Methyltransferase catalyzes transfer of a methyl group from S-adenosylmethionine to GTP and GDP to yield m(7)GTP or m(7)GDP. GDP is a better substrate than GTP. This enzyme also displays guanylyltransferase activity to form a covalent complex, methyltransferase-m(7)GMP, from which 7-methyl-GMP is transferred to the mRNA to create the cap structure. Its function is as follows. Y-domain: Indispensable for virus replication. Functionally, putative protease: The putative protease domain although necessary for replication of the virus may not be a protease but rather a structural Zn(2+)-binding domain. Inhibits induction of IFN-beta by MDA5 and RIG-I pathways and down-regulates the expression of MDA5. In terms of biological role, NTPase/helicase: Multi-functional protein that exhibits NTPase and RNA unwinding activities. Hydrolyzes all NTPs efficiently and unwinds RNA duplexes containing 5' overhangs. Possesses a sequence independent RNA-5'-triphosphatase (RTPase) activity suggestive of its role in forming viral cap structure. Also participates in viral genome replication, RNA translocation and genome packaging/unpackaging. RNA-directed RNA polymerase: Plays an essential role in the virus replication. Binds to the 3'-end of the genomic RNA to initiate viral replication. The chain is Non-structural polyprotein pORF1 from Hepatitis E virus genotype 1 (isolate Human/Pakistan/Sar-55) (HEV-1).